We begin with the raw amino-acid sequence, 260 residues long: UPF0246 protein Bmul_1054/BMULJ_02209 (260 aa).

It belongs to the UPF0246 family.

The chain is UPF0246 protein Bmul_1054/BMULJ_02209 from Burkholderia multivorans (strain ATCC 17616 / 249).